A 232-amino-acid chain; its full sequence is H-2 class II histocompatibility antigen, E-S beta chain (232 aa).

Residues 1–90 form a beta-1 region; the sequence is WFLEYSTSEC…LDKFLVPRRV (90 aa). Residues 1–193 lie on the Extracellular side of the membrane; sequence WFLEYSTSEC…KAQSTSAQNK (193 aa). Cystine bridges form between Cys10–Cys74 and Cys112–Cys168. A glycan (N-linked (GlcNAc...) asparagine) is linked at Asn14. Positions 91–193 are beta-2; that stretch reads EPTVTVYPTK…KAQSTSAQNK (103 aa). In terms of domain architecture, Ig-like C1-type spans 92–182; it reads PTVTVYPTKT…PSLTDPVTVE (91 aa). The helical transmembrane segment at 194–216 threads the bilayer; sequence MLSGVGGFVLGLLFLGAGLFIYF. At 217 to 232 the chain is on the cytoplasmic side; sequence RNQKGQSGLQPTGLLS.

It belongs to the MHC class II family. Post-translationally, ubiquitinated in immature dendritic cells leading to down-regulation of MHC class II.

It localises to the membrane. The polypeptide is H-2 class II histocompatibility antigen, E-S beta chain (H2-Eb1) (Mus musculus (Mouse)).